The chain runs to 507 residues: Maturase K (507 aa).

This sequence belongs to the intron maturase 2 family. MatK subfamily.

It localises to the plastid. It is found in the chloroplast. Its function is as follows. Usually encoded in the trnK tRNA gene intron. Probably assists in splicing its own and other chloroplast group II introns. This is Maturase K from Lyonia ferruginea (Rusty staggerbush).